An 836-amino-acid polypeptide reads, in one-letter code: Exonuclease 1 (836 aa).

Residues 1–99 are N-domain; the sequence is MGIQGLLPQL…TKRERSRKEN (99 aa). Residues aspartate 30 and aspartate 78 each contribute to the Mg(2+) site. The segment at 82-108 is disordered; the sequence is LPMKGDQETKRERSRKENLERAKEHES. The segment covering 84–108 has biased composition (basic and acidic residues); that stretch reads MKGDQETKRERSRKENLERAKEHES. The interval 138–230 is I-domain; the sequence is KQEKVDYIVA…ILSGCDYLPS (93 aa). Mg(2+) contacts are provided by glutamate 150, aspartate 152, aspartate 171, aspartate 173, and aspartate 226. 3 disordered regions span residues 464 to 488, 568 to 641, and 744 to 836; these read RDDS…DPDI, EDEC…TNSE, and TASA…TSRS. Residues 568–577 show a composition bias toward acidic residues; sequence EDECHDEDNC. Composition is skewed to polar residues over residues 578–592 and 744–758; these read ETGN…QRSS and TASA…TSKA.

The protein belongs to the XPG/RAD2 endonuclease family. EXO1 subfamily. Mg(2+) serves as cofactor.

It is found in the nucleus. Its function is as follows. Putative 5'-&gt;3' double-stranded DNA exonuclease which may also contain a cryptic 3'-&gt;5' double-stranded DNA exonuclease activity. May be involved in DNA mismatch repair (MMR). This is Exonuclease 1 (EXO1) from Oryza sativa subsp. japonica (Rice).